We begin with the raw amino-acid sequence, 1712 residues long: Neurexin-2 (1712 aa).

The signal sequence occupies residues 1–28 (MASGSRWRPTPPPLLLLLLLALAARADG). One can recognise a Laminin G-like 1 domain in the interval 29-206 (LEFGGGPGQW…LRGATADPLC (178 aa)). Topologically, residues 29 to 1636 (LEFGGGPGQW…EVIRESSSTT (1608 aa)) are extracellular. Residue Asn-60 is glycosylated (N-linked (GlcNAc...) asparagine). Residues 202-242 (ADPLCAPARNPCANGGLCTVLAPGEVGCDCSHTGFGGKFCS) enclose the EGF-like 1 domain. 3 cysteine pairs are disulfide-bonded: Cys-206–Cys-219, Cys-213–Cys-229, and Cys-231–Cys-241. Laminin G-like domains lie at 289-486 (VATF…SFRC) and 493-686 (DPVT…APFC). Residue Asp-335 coordinates Ca(2+). N-linked (GlcNAc...) asparagine glycosylation is present at Asn-338. The Ca(2+) site is built by Leu-352 and Met-420. 5 disulfides stabilise this stretch: Cys-450-Cys-486, Cys-657-Cys-686, Cys-694-Cys-705, Cys-699-Cys-714, and Cys-716-Cys-726. The EGF-like 2 domain occupies 690–727 (TLKQCASAPCRNGGVCREGWNRFICDCIGTGFLGRVCE). 2 consecutive Laminin G-like domains span residues 732 to 904 (VLSY…ITYC) and 918 to 1093 (DPVT…ERGC). Asp-779 and Leu-796 together coordinate Ca(2+). Asn-841 carries an N-linked (GlcNAc...) asparagine glycan. Arg-854 provides a ligand contact to Ca(2+). Disulfide bonds link Cys-1065/Cys-1093, Cys-1100/Cys-1111, Cys-1105/Cys-1120, and Cys-1122/Cys-1132. In terms of domain architecture, EGF-like 3 spans 1096-1133 (PSTTCTEESCANQGVCLQQWDGFTCDCTMTSYGGPVCN). The 209-residue stretch at 1137–1345 (TTYIFGKGGA…HLRLVGEGPS (209 aa)) folds into the Laminin G-like 6 domain. Asp-1189 and Val-1206 together coordinate Ca(2+). The N-linked (GlcNAc...) asparagine glycan is linked to Asn-1236. Ile-1288 and Asn-1290 together coordinate Ca(2+). The interval 1373 to 1392 (ATTTTRRGRSPTLRDSTTQN) is disordered. Ser-1400 carries an O-linked (Xyl...) (heparan sulfate) serine glycan. Disordered regions lie at residues 1458-1489 (ATQD…CEEP) and 1525-1626 (TLLS…PGAV). A helical membrane pass occupies residues 1637–1657 (GMVVGIVAAAALCILILLYAM). Residues 1658–1712 (YKYRNRDEGSYQVDQSRNYISNSAQSNGAVVKEKAPAAPKTPSKAKKNKDKEYYV) are Cytoplasmic-facing. The segment at 1679–1712 (NSAQSNGAVVKEKAPAAPKTPSKAKKNKDKEYYV) is disordered.

The protein belongs to the neurexin family. The laminin G-like domain 1 binds to NXPH1. Interacts with PATJ. Interacts with CBLN1, CBLN2 and, less avidly, with CBLN4. Specific isoforms bind neuroligins NLGN1, NLGN2 and NLGN3. Specific isoforms bind to alpha-dystroglycan. Interacts (via Laminin G-like 1 domain) with IGSF21 (Ig-like 1 domain) in a trans-interaction manner. Interacts with CLSTN3. In terms of processing, O-glycosylated; contains heparan sulfate. Heparan sulfate attachment is required for synapse development by mediating interactions with neuroligins. As to expression, predominantly expressed in brain.

The protein localises to the presynaptic cell membrane. In terms of biological role, neuronal cell surface protein that may be involved in cell recognition and cell adhesion. May mediate intracellular signaling. The polypeptide is Neurexin-2 (NRXN2) (Homo sapiens (Human)).